We begin with the raw amino-acid sequence, 1235 residues long: ATP-dependent helicase/nuclease subunit A (1235 aa).

The region spanning 3 to 471 (TKWTETQKSA…IKLSENFRSR (469 aa)) is the UvrD-like helicase ATP-binding domain. 24 to 31 (AGAGTGKT) provides a ligand contact to ATP. The 300-residue stretch at 509-808 (PFEGNCGGDV…RIMSIHKSKG (300 aa)) folds into the UvrD-like helicase C-terminal domain.

The protein belongs to the helicase family. AddA subfamily. In terms of assembly, heterodimer of AddA and AddB/RexB. Requires Mg(2+) as cofactor.

The catalysed reaction is Couples ATP hydrolysis with the unwinding of duplex DNA by translocating in the 3'-5' direction.. It carries out the reaction ATP + H2O = ADP + phosphate + H(+). Its function is as follows. The heterodimer acts as both an ATP-dependent DNA helicase and an ATP-dependent, dual-direction single-stranded exonuclease. Recognizes the chi site generating a DNA molecule suitable for the initiation of homologous recombination. The AddA nuclease domain is required for chi fragment generation; this subunit has the helicase and 3' -&gt; 5' nuclease activities. This is ATP-dependent helicase/nuclease subunit A from Clostridium kluyveri (strain ATCC 8527 / DSM 555 / NBRC 12016 / NCIMB 10680 / K1).